A 230-amino-acid polypeptide reads, in one-letter code: Orotidine 5'-phosphate decarboxylase (230 aa).

Substrate-binding positions include Asp10, Lys31, 58 to 67, Thr117, Arg179, Gln188, Gly208, and Arg209; that span reads DLKLHDIPNT. Lys60 acts as the Proton donor in catalysis.

It belongs to the OMP decarboxylase family. Type 1 subfamily. Homodimer.

It catalyses the reaction orotidine 5'-phosphate + H(+) = UMP + CO2. Its pathway is pyrimidine metabolism; UMP biosynthesis via de novo pathway; UMP from orotate: step 2/2. Catalyzes the decarboxylation of orotidine 5'-monophosphate (OMP) to uridine 5'-monophosphate (UMP). This Staphylococcus aureus (strain bovine RF122 / ET3-1) protein is Orotidine 5'-phosphate decarboxylase.